The following is a 1783-amino-acid chain: Doublecortin domain-containing protein 1 (1783 aa).

Residues 93 to 133 (GLQDCSTHQTASDHSHDEISDLDSYKSNSKNNSCSISASKR) form a disordered region. Low complexity predominate over residues 117-131 (YKSNSKNNSCSISAS). In terms of domain architecture, Doublecortin 1 spans 168–252 (KLQPRVIKVT…FLNPFKKIKD (85 aa)). The Ricin B-type lectin 1 domain maps to 702–800 (WLITKTGMIL…HIHHGAWTTA (99 aa)). The interval 860-880 (ASAQRWAIKHEGTSKPGQWKH) is disordered. The 91-residue stretch at 925–1015 (PICKTTEPYA…ELWINPDLSI (91 aa)) folds into the Doublecortin 2 domain. The Ricin B-type lectin 2 domain occupies 1151 to 1266 (SCSPKHSKLH…GAANQKWHYM (116 aa)).

Interacts with dynein intermediate chain, tubulin, RAB8A, RAB3IP, NUDC, PAFAH1B1 and DCTN1.

It localises to the midbody. Its subcellular location is the midbody ring. The protein localises to the cytoplasm. It is found in the cytoskeleton. The protein resides in the spindle. Its function is as follows. Microtubule-binding protein which plays an important role in mediating dynein-dependent transport of RAB8A-positive vesicles to the midbody during cytokinesis. The chain is Doublecortin domain-containing protein 1 from Homo sapiens (Human).